The chain runs to 275 residues: Large ribosomal subunit protein uL2 (275 aa).

Disordered regions lie at residues 28–59 (KPYAPLLDTQSSTAGRNNNGHITTRHKGGGHK) and 224–275 (AMNP…RHKR). Positions 35–46 (DTQSSTAGRNNN) are enriched in polar residues. Basic residues predominate over residues 50–59 (TTRHKGGGHK).

It belongs to the universal ribosomal protein uL2 family. In terms of assembly, part of the 50S ribosomal subunit. Forms a bridge to the 30S subunit in the 70S ribosome.

In terms of biological role, one of the primary rRNA binding proteins. Required for association of the 30S and 50S subunits to form the 70S ribosome, for tRNA binding and peptide bond formation. It has been suggested to have peptidyltransferase activity; this is somewhat controversial. Makes several contacts with the 16S rRNA in the 70S ribosome. The chain is Large ribosomal subunit protein uL2 from Paraburkholderia phymatum (strain DSM 17167 / CIP 108236 / LMG 21445 / STM815) (Burkholderia phymatum).